The chain runs to 282 residues: Pantothenate synthetase (282 aa).

Position 30 to 37 (30 to 37) interacts with ATP; sequence MGYLHEGH. Residue H37 is the Proton donor of the active site. Q61 is a binding site for (R)-pantoate. Q61 serves as a coordination point for beta-alanine. 147–150 lines the ATP pocket; sequence GMKD. Position 153 (Q153) interacts with (R)-pantoate. ATP contacts are provided by residues V176 and 184–187; that span reads KSSR.

Belongs to the pantothenate synthetase family. As to quaternary structure, homodimer.

It localises to the cytoplasm. It carries out the reaction (R)-pantoate + beta-alanine + ATP = (R)-pantothenate + AMP + diphosphate + H(+). It participates in cofactor biosynthesis; (R)-pantothenate biosynthesis; (R)-pantothenate from (R)-pantoate and beta-alanine: step 1/1. Catalyzes the condensation of pantoate with beta-alanine in an ATP-dependent reaction via a pantoyl-adenylate intermediate. The sequence is that of Pantothenate synthetase from Bacillus cytotoxicus (strain DSM 22905 / CIP 110041 / 391-98 / NVH 391-98).